The primary structure comprises 84 residues: Three-finger toxin 3FTx-1 (84 aa).

The first 21 residues, 1–21, serve as a signal peptide directing secretion; that stretch reads MKTLLLTLVVVTIVCLDLGNS. Disulfide bonds link Cys24/Cys41, Cys34/Cys59, Cys63/Cys71, and Cys72/Cys77. Residue Asn78 is glycosylated (N-linked (GlcNAc...) asparagine).

The protein belongs to the three-finger toxin family. Short-chain subfamily. In terms of tissue distribution, expressed by the venom gland.

The protein localises to the secreted. The protein is Three-finger toxin 3FTx-1 of Micrurus corallinus (Brazilian coral snake).